The chain runs to 156 residues: ATP synthase subunit b (156 aa).

The helical transmembrane segment at 11 to 31 threads the bilayer; sequence AIAFFIFVVFCMKYVWPPLMA.

This sequence belongs to the ATPase B chain family. In terms of assembly, F-type ATPases have 2 components, F(1) - the catalytic core - and F(0) - the membrane proton channel. F(1) has five subunits: alpha(3), beta(3), gamma(1), delta(1), epsilon(1). F(0) has three main subunits: a(1), b(2) and c(10-14). The alpha and beta chains form an alternating ring which encloses part of the gamma chain. F(1) is attached to F(0) by a central stalk formed by the gamma and epsilon chains, while a peripheral stalk is formed by the delta and b chains.

Its subcellular location is the cell inner membrane. Functionally, f(1)F(0) ATP synthase produces ATP from ADP in the presence of a proton or sodium gradient. F-type ATPases consist of two structural domains, F(1) containing the extramembraneous catalytic core and F(0) containing the membrane proton channel, linked together by a central stalk and a peripheral stalk. During catalysis, ATP synthesis in the catalytic domain of F(1) is coupled via a rotary mechanism of the central stalk subunits to proton translocation. Its function is as follows. Component of the F(0) channel, it forms part of the peripheral stalk, linking F(1) to F(0). This chain is ATP synthase subunit b, found in Aeromonas hydrophila subsp. hydrophila (strain ATCC 7966 / DSM 30187 / BCRC 13018 / CCUG 14551 / JCM 1027 / KCTC 2358 / NCIMB 9240 / NCTC 8049).